A 357-amino-acid chain; its full sequence is MASLNPFDLLGDDAEDPSQLAVALSQKVEKAAAAVQPPKAAKFPTKPAPPSQAVRESRNAPQGGRGGTGGRGGFSRGRGNGGYNRDNRNNDAPGNENGFSGGYRRPSEDADGASRGGSVGGYRVGGGREGPRRGGVANGESGDVERPPRNYDRHSRTGHGTGMKRNGGGRGNWGTTEDDIPPTSEEPTTEVEKSPVAEKQGGEDETPEAKKELTAEEKAQKEAEEAEAREMTLEEYEKILEEKKKALQATKVEERKVDTKVFESMQQLSNKKNTDEEIFIKLGSDKEKRKDATEKAKKSLSINEFLKPADGKRYNGRGGGSRGRGGRGGRGEGGNQRYAKEAAAPAIGDTAQFPSLG.

At alanine 2 the chain carries N-acetylalanine. The tract at residues 25–232 (SQKVEKAAAA…AEEAEAREMT (208 aa)) is disordered. Residues 31 to 45 (AAAAVQPPKAAKFPT) show a composition bias toward low complexity. 2 stretches are compositionally biased toward gly residues: residues 63-82 (GGRGGTGGRGGFSRGRGNGG) and 114-128 (SRGGSVGGYRVGGGR). Positions 143 to 155 (DVERPPRNYDRHS) are enriched in basic and acidic residues. A compositionally biased stretch (gly residues) spans 159–172 (HGTGMKRNGGGRGN). Residues 190–232 (EVEKSPVAEKQGGEDETPEAKKELTAEEKAQKEAEEAEAREMT) are compositionally biased toward basic and acidic residues. Positions 239 to 299 (ILEEKKKALQ…KDATEKAKKS (61 aa)) constitute an FF domain. Residues 308–357 (PADGKRYNGRGGGSRGRGGRGGRGEGGNQRYAKEAAAPAIGDTAQFPSLG) are disordered. Gly residues predominate over residues 316–334 (GRGGGSRGRGGRGGRGEGG). Serine 355 is modified (phosphoserine).

The protein belongs to the SERBP1-HABP4 family.

The protein resides in the nucleus. It localises to the cytoplasm. Its subcellular location is the perinuclear region. Ribosome-binding protein that acts as a regulator of mRNA translation by promoting ribosome inactivation. Binds RNA. This chain is RGG repeats nuclear RNA binding protein C, found in Arabidopsis thaliana (Mouse-ear cress).